Here is a 518-residue protein sequence, read N- to C-terminus: Membrane-bound lytic murein transglycosylase F (518 aa).

The first 21 residues, 1-21 (MKKLKINYLFIGILALLLAVA), serve as a signal peptide directing secretion. The tract at residues 22-269 (LWPSIPWFGK…RIEEKYLGHG (248 aa)) is non-LT domain. An LT domain region spans residues 270–518 (DDFDYVDTRT…SRKGSEEKQN (249 aa)). Glutamate 314 is a catalytic residue.

The protein in the N-terminal section; belongs to the bacterial solute-binding protein 3 family. This sequence in the C-terminal section; belongs to the transglycosylase Slt family.

It is found in the cell outer membrane. The catalysed reaction is Exolytic cleavage of the (1-&gt;4)-beta-glycosidic linkage between N-acetylmuramic acid (MurNAc) and N-acetylglucosamine (GlcNAc) residues in peptidoglycan, from either the reducing or the non-reducing ends of the peptidoglycan chains, with concomitant formation of a 1,6-anhydrobond in the MurNAc residue.. In terms of biological role, murein-degrading enzyme that degrades murein glycan strands and insoluble, high-molecular weight murein sacculi, with the concomitant formation of a 1,6-anhydromuramoyl product. Lytic transglycosylases (LTs) play an integral role in the metabolism of the peptidoglycan (PG) sacculus. Their lytic action creates space within the PG sacculus to allow for its expansion as well as for the insertion of various structures such as secretion systems and flagella. The polypeptide is Membrane-bound lytic murein transglycosylase F (Escherichia coli O6:K15:H31 (strain 536 / UPEC)).